Here is a 129-residue protein sequence, read N- to C-terminus: Large ribosomal subunit protein uL22 (129 aa).

Belongs to the universal ribosomal protein uL22 family. Part of the 50S ribosomal subunit.

In terms of biological role, this protein binds specifically to 23S rRNA; its binding is stimulated by other ribosomal proteins, e.g. L4, L17, and L20. It is important during the early stages of 50S assembly. It makes multiple contacts with different domains of the 23S rRNA in the assembled 50S subunit and ribosome. The globular domain of the protein is located near the polypeptide exit tunnel on the outside of the subunit, while an extended beta-hairpin is found that lines the wall of the exit tunnel in the center of the 70S ribosome. The chain is Large ribosomal subunit protein uL22 from Rhizobium etli (strain ATCC 51251 / DSM 11541 / JCM 21823 / NBRC 15573 / CFN 42).